The following is a 267-amino-acid chain: Cytochrome b (267 aa).

The next 4 membrane-spanning stretches (helical) occupy residues 33–53 (FGSL…FLAM), 77–98 (WLIR…FIHV), 113–133 (WNIG…GYVL), and 178–198 (FFAF…VHLL). Heme b contacts are provided by His83 and His97. Heme b contacts are provided by His182 and His196. A ubiquinone is bound at residue His201. Residues 226 to 246 (IKDLLGVILLLMVLMILVLFF) traverse the membrane as a helical segment.

It belongs to the cytochrome b family. The cytochrome bc1 complex contains 11 subunits: 3 respiratory subunits (MT-CYB, CYC1 and UQCRFS1), 2 core proteins (UQCRC1 and UQCRC2) and 6 low-molecular weight proteins (UQCRH/QCR6, UQCRB/QCR7, UQCRQ/QCR8, UQCR10/QCR9, UQCR11/QCR10 and a cleavage product of UQCRFS1). This cytochrome bc1 complex then forms a dimer. Heme b is required as a cofactor.

The protein resides in the mitochondrion inner membrane. Its function is as follows. Component of the ubiquinol-cytochrome c reductase complex (complex III or cytochrome b-c1 complex) that is part of the mitochondrial respiratory chain. The b-c1 complex mediates electron transfer from ubiquinol to cytochrome c. Contributes to the generation of a proton gradient across the mitochondrial membrane that is then used for ATP synthesis. The polypeptide is Cytochrome b (MT-CYB) (Abrothrix olivaceus (Olive grass mouse)).